Reading from the N-terminus, the 120-residue chain is Large ribosomal subunit protein uL18 (120 aa).

The protein belongs to the universal ribosomal protein uL18 family. Part of the 50S ribosomal subunit; part of the 5S rRNA/L5/L18/L25 subcomplex. Contacts the 5S and 23S rRNAs.

This is one of the proteins that bind and probably mediate the attachment of the 5S RNA into the large ribosomal subunit, where it forms part of the central protuberance. In Agrobacterium fabrum (strain C58 / ATCC 33970) (Agrobacterium tumefaciens (strain C58)), this protein is Large ribosomal subunit protein uL18.